The chain runs to 245 residues: 1-(5-phosphoribosyl)-5-[(5-phosphoribosylamino)methylideneamino] imidazole-4-carboxamide isomerase (245 aa).

Asp8 acts as the Proton acceptor in catalysis. Residue Asp130 is the Proton donor of the active site.

Belongs to the HisA/HisF family.

The protein localises to the cytoplasm. The enzyme catalyses 1-(5-phospho-beta-D-ribosyl)-5-[(5-phospho-beta-D-ribosylamino)methylideneamino]imidazole-4-carboxamide = 5-[(5-phospho-1-deoxy-D-ribulos-1-ylimino)methylamino]-1-(5-phospho-beta-D-ribosyl)imidazole-4-carboxamide. It participates in amino-acid biosynthesis; L-histidine biosynthesis; L-histidine from 5-phospho-alpha-D-ribose 1-diphosphate: step 4/9. The protein is 1-(5-phosphoribosyl)-5-[(5-phosphoribosylamino)methylideneamino] imidazole-4-carboxamide isomerase of Pseudomonas putida (strain ATCC 47054 / DSM 6125 / CFBP 8728 / NCIMB 11950 / KT2440).